A 607-amino-acid chain; its full sequence is Elongation factor 4 (607 aa).

The tr-type G domain maps to 11-193 (SRIRNFSIIA…QVVEKVPAPA (183 aa)). GTP is bound by residues 23-28 (DHGKST) and 140-143 (NKID).

Belongs to the TRAFAC class translation factor GTPase superfamily. Classic translation factor GTPase family. LepA subfamily.

The protein localises to the cell membrane. The catalysed reaction is GTP + H2O = GDP + phosphate + H(+). In terms of biological role, required for accurate and efficient protein synthesis under certain stress conditions. May act as a fidelity factor of the translation reaction, by catalyzing a one-codon backward translocation of tRNAs on improperly translocated ribosomes. Back-translocation proceeds from a post-translocation (POST) complex to a pre-translocation (PRE) complex, thus giving elongation factor G a second chance to translocate the tRNAs correctly. Binds to ribosomes in a GTP-dependent manner. The polypeptide is Elongation factor 4 (Shouchella clausii (strain KSM-K16) (Alkalihalobacillus clausii)).